The sequence spans 275 residues: Large ribosomal subunit protein uL2 (275 aa).

Positions 223 to 275 (VAMNPVDHPHGGGEGRTSGGRHPVTPWGVPTKGYKTRSNKRTDKYIVRRRNKK) are disordered.

The protein belongs to the universal ribosomal protein uL2 family. In terms of assembly, part of the 50S ribosomal subunit. Forms a bridge to the 30S subunit in the 70S ribosome.

In terms of biological role, one of the primary rRNA binding proteins. Required for association of the 30S and 50S subunits to form the 70S ribosome, for tRNA binding and peptide bond formation. It has been suggested to have peptidyltransferase activity; this is somewhat controversial. Makes several contacts with the 16S rRNA in the 70S ribosome. The sequence is that of Large ribosomal subunit protein uL2 from Shewanella loihica (strain ATCC BAA-1088 / PV-4).